Consider the following 301-residue polypeptide: Galectin-6 (301 aa).

Galectin domains are found at residues 19–149 (YKRP…INFF) and 173–301 (YVGA…YVHI).

The sequence is that of Galectin-6 (Lgals6) from Mus musculus (Mouse).